A 486-amino-acid chain; its full sequence is UDP-N-acetylmuramoyl-L-alanyl-D-glutamate--2,6-diaminopimelate ligase (486 aa).

Residue Ser33 participates in UDP-N-acetyl-alpha-D-muramoyl-L-alanyl-D-glutamate binding. Residue 110–116 (GTNGKTS) coordinates ATP. UDP-N-acetyl-alpha-D-muramoyl-L-alanyl-D-glutamate is bound by residues 152-153 (TT), Ser179, Gln185, and Arg187. An N6-carboxylysine modification is found at Lys219. Residues Arg383, 407-410 (DNPR), Gly455, and Glu459 contribute to the meso-2,6-diaminopimelate site. Residues 407 to 410 (DNPR) carry the Meso-diaminopimelate recognition motif motif.

The protein belongs to the MurCDEF family. MurE subfamily. The cofactor is Mg(2+). In terms of processing, carboxylation is probably crucial for Mg(2+) binding and, consequently, for the gamma-phosphate positioning of ATP.

Its subcellular location is the cytoplasm. The enzyme catalyses UDP-N-acetyl-alpha-D-muramoyl-L-alanyl-D-glutamate + meso-2,6-diaminopimelate + ATP = UDP-N-acetyl-alpha-D-muramoyl-L-alanyl-gamma-D-glutamyl-meso-2,6-diaminopimelate + ADP + phosphate + H(+). The protein operates within cell wall biogenesis; peptidoglycan biosynthesis. Functionally, catalyzes the addition of meso-diaminopimelic acid to the nucleotide precursor UDP-N-acetylmuramoyl-L-alanyl-D-glutamate (UMAG) in the biosynthesis of bacterial cell-wall peptidoglycan. This chain is UDP-N-acetylmuramoyl-L-alanyl-D-glutamate--2,6-diaminopimelate ligase, found in Zymomonas mobilis subsp. mobilis (strain ATCC 31821 / ZM4 / CP4).